Here is a 124-residue protein sequence, read N- to C-terminus: Keratin-associated protein 12-2 (124 aa).

20 consecutive repeat copies span residues 10–13, 14–18, 19–23, 24–28, 33–38, 39–43, 44–48, 49–52, 53–57, 58–62, 63–67, 68–72, 73–77, 78–82, 83–87, 88–92, 98–102, 103–107, 108–112, and 113–117. The interval 10–117 is 20 X 5 AA approximate repeats; that stretch reads CQAACVPSSC…CPTLVYRPIS (108 aa).

This sequence belongs to the KRTAP type 12 family. Interacts with hair keratins.

In terms of biological role, in the hair cortex, hair keratin intermediate filaments are embedded in an interfilamentous matrix, consisting of hair keratin-associated proteins (KRTAP), which are essential for the formation of a rigid and resistant hair shaft through their extensive disulfide bond cross-linking with abundant cysteine residues of hair keratins. The matrix proteins include the high-sulfur and high-glycine-tyrosine keratins. This is Keratin-associated protein 12-2 from Bos taurus (Bovine).